Here is a 787-residue protein sequence, read N- to C-terminus: Disease resistance protein ADR1 (787 aa).

The RPW8 domain maps to 1-149; it reads MASFIDLFAG…LLTERNDSLS (149 aa). Residues 96–112 are a coiled coil; it reads HANKMKDLEKQISRFLN. 193-200 contributes to the ATP binding site; it reads GMSGSGKT. The NB-ARC domain maps to 247 to 414; sequence HQRKLVILDD…PLDLLTSVWV (168 aa). LRR repeat units lie at residues 549–575, 576–599, 650–674, and 722–745; these read MSRL…IFAN, LAKL…TIPL, ITSL…LSNV, and LGSL…VAAL.

This sequence belongs to the disease resistance NB-LRR family.

Disease resistance (R) protein that mediates resistance against Hyaloperonospora parasitica in a salicylic acid-dependent manner. Also mediates resistance against Erysiphe cichoracearum is both salicylic acid-dependent and partially NPR1-dependent. Resistance proteins guard the plant against pathogens that contain an appropriate avirulence protein via an indirect interaction with this avirulence protein. That triggers a defense system including the hypersensitive response, which restricts the pathogen growth. In Arabidopsis thaliana (Mouse-ear cress), this protein is Disease resistance protein ADR1 (ADR1).